The following is a 151-amino-acid chain: Aspartate carbamoyltransferase regulatory chain (151 aa).

Zn(2+) contacts are provided by Cys-108, Cys-113, Cys-136, and Cys-139.

This sequence belongs to the PyrI family. As to quaternary structure, contains catalytic and regulatory chains. The cofactor is Zn(2+).

Functionally, involved in allosteric regulation of aspartate carbamoyltransferase. The sequence is that of Aspartate carbamoyltransferase regulatory chain from Porphyromonas gingivalis (strain ATCC 33277 / DSM 20709 / CIP 103683 / JCM 12257 / NCTC 11834 / 2561).